The chain runs to 442 residues: MSERKYFGTDGVRAVAGEFPLTSAWVMSLGAAAGEVLRRVNPHARVVIGKDTRQSGDMLEAALAAGLTSRGVTVIHVGVLPTPGVSYLTRHLKADAGVVISASHNPYEDNGIKFFGADGQKLSDATELQIEAAIDEVPGFAPLTGTAMGSVTNYTEAEHLYTDFLKSHAPDLSGLKIALDCANGAAYRVAPKVFQAAGADVFAIYTTPDGRNINRGCGSTHMDHLRQIVREGEYDLGVAFDGDADRALFVDSRGQVVHGDHMLLLNARARGEQAVVATIMTNMALEAKLQDAGIPLERTAVGDRYVHERLHEKGLSLGGEQSGHVLFLDISPTGDGVLTALLTLASMKKLGTTLDALHDDLVMYPQTLVNVRVQDKKAIAVDQQVQQAVRQAEEQLLGRGRVNLRPSGTENLIRVMVEGQDAAEIHEVARVLAGVVEARGQA.

S103 (phosphoserine intermediate) is an active-site residue. 4 residues coordinate Mg(2+): S103, D241, D243, and D245. Residue S103 is modified to Phosphoserine.

The protein belongs to the phosphohexose mutase family. Mg(2+) serves as cofactor. Activated by phosphorylation.

It catalyses the reaction alpha-D-glucosamine 1-phosphate = D-glucosamine 6-phosphate. Functionally, catalyzes the conversion of glucosamine-6-phosphate to glucosamine-1-phosphate. The chain is Phosphoglucosamine mutase from Deinococcus deserti (strain DSM 17065 / CIP 109153 / LMG 22923 / VCD115).